A 364-amino-acid chain; its full sequence is MKDSLRERLDQMVDRFEEVTALLSDPDTISDNNKFRELSMEHSELSEITALWQRYRQAEIDKKDAQEMINDASDPDMKEMMQEEIDSASRDIEAMEEELNVMMLPKDPNDKVPAFLEIRAGTGGDEAAIFSGDLFRMYERYASSQGWTIEVLSANEGEHGGYKEIISRVSGNDVYGRLKFESGAHRVQRVPETESQGRVHTSACTVAVMPEVEIDDTVELNPADIRMDTFRSSGAGGQHVNTTDSAVRLTHIPTGVVAECQQERSQHKNRAKAMQMLIARIQQAKVQEQVDTADALRRNLVGSGDRSERIRTYNFPQGRMTDHRINLTLYKLDAIMEGDLTELLDALNREHQADLMASIGGGDD.

Glutamine 238 carries the N5-methylglutamine modification.

Belongs to the prokaryotic/mitochondrial release factor family. Post-translationally, methylated by PrmC. Methylation increases the termination efficiency of RF1.

It is found in the cytoplasm. Its function is as follows. Peptide chain release factor 1 directs the termination of translation in response to the peptide chain termination codons UAG and UAA. The protein is Peptide chain release factor 1 of Psychrobacter sp. (strain PRwf-1).